The primary structure comprises 825 residues: Translation initiation factor IF-2 (825 aa).

4 stretches are compositionally biased toward basic and acidic residues: residues 1–19, 35–45, 70–98, and 113–122; these read MTKK…DNKK, RKGEKKTEGKR, LLKD…EYKK, and KKVESVEKPA. Residues 1–239 are disordered; that stretch reads MTKKQENETS…TQRKDRPLPE (239 aa). The span at 158–169 shows a compositional bias: low complexity; sequence PSSSRRPSSRPS. Positions 181–191 are enriched in basic residues; sequence GRRRKSGKPGR. The segment covering 194 to 208 has biased composition (polar residues); sequence QNSYADQGRGANSNR. Positions 211–220 are enriched in basic residues; that stretch reads QRKRKNKKHQ. The tr-type G domain maps to 326–495; sequence VRPPVVTIMG…ILEADMLELK (170 aa). The interval 335–342 is G1; sequence GHVDHGKT. Residue 335–342 participates in GTP binding; the sequence is GHVDHGKT. Residues 360-364 form a G2 region; sequence GITQN. The tract at residues 381-384 is G3; that stretch reads DTPG. GTP is bound by residues 381–385 and 435–438; these read DTPGH and NKMD. The segment at 435–438 is G4; it reads NKMD. The G5 stretch occupies residues 471-473; that stretch reads SAK.

The protein belongs to the TRAFAC class translation factor GTPase superfamily. Classic translation factor GTPase family. IF-2 subfamily.

Its subcellular location is the cytoplasm. Its function is as follows. One of the essential components for the initiation of protein synthesis. Protects formylmethionyl-tRNA from spontaneous hydrolysis and promotes its binding to the 30S ribosomal subunits. Also involved in the hydrolysis of GTP during the formation of the 70S ribosomal complex. The protein is Translation initiation factor IF-2 of Lactobacillus delbrueckii subsp. bulgaricus (strain ATCC BAA-365 / Lb-18).